A 60-amino-acid chain; its full sequence is UI (60 aa).

The span at 1–14 (AAAAGDSAASDLLG) shows a compositional bias: low complexity. Residues 1-22 (AAAAGDSAASDLLGDNILRSED) are disordered. Val60 is modified (valine amide).

This sequence belongs to the sauvagine/corticotropin-releasing factor/urotensin I family.

Its subcellular location is the secreted. Functionally, urotensin is found in the teleost caudal neurosecretory system. It has a suggested role in osmoregulation and as a corticotropin-releasing factor. The non-hormonal portion of this precursor may be a urotensin binding protein, urophysin. The polypeptide is UI (Platichthys flesus (European flounder)).